A 156-amino-acid chain; its full sequence is ATP synthase subunit b (156 aa).

The helical transmembrane segment at 7-26 (ILGQAIAFVLFVWFCMKYVW) threads the bilayer.

This sequence belongs to the ATPase B chain family. F-type ATPases have 2 components, F(1) - the catalytic core - and F(0) - the membrane proton channel. F(1) has five subunits: alpha(3), beta(3), gamma(1), delta(1), epsilon(1). F(0) has three main subunits: a(1), b(2) and c(10-14). The alpha and beta chains form an alternating ring which encloses part of the gamma chain. F(1) is attached to F(0) by a central stalk formed by the gamma and epsilon chains, while a peripheral stalk is formed by the delta and b chains.

It localises to the cell inner membrane. F(1)F(0) ATP synthase produces ATP from ADP in the presence of a proton or sodium gradient. F-type ATPases consist of two structural domains, F(1) containing the extramembraneous catalytic core and F(0) containing the membrane proton channel, linked together by a central stalk and a peripheral stalk. During catalysis, ATP synthesis in the catalytic domain of F(1) is coupled via a rotary mechanism of the central stalk subunits to proton translocation. In terms of biological role, component of the F(0) channel, it forms part of the peripheral stalk, linking F(1) to F(0). The protein is ATP synthase subunit b of Pectobacterium atrosepticum (strain SCRI 1043 / ATCC BAA-672) (Erwinia carotovora subsp. atroseptica).